The primary structure comprises 111 residues: Type III endosome membrane protein TEMP (111 aa).

The Extracellular portion of the chain corresponds to 1-27; it reads MIGGNTTIISGAINASTEAPGLGTGGR. A glycan (N-linked (GlcNAc...) asparagine) is linked at Asn-5. The helical; Signal-anchor for type III membrane protein transmembrane segment at 28–48 threads the bilayer; sequence AWPVLVGVVLGAVVLSILIAL. Topologically, residues 49–111 are cytoplasmic; sequence AAKCHLCRRY…TTGSRDHFSL (63 aa). A disordered region spans residues 64–111; sequence HRPLSSAGGGNRPPVGEDEDDDGFIEDNYIQPGAGEMETTGSRDHFSL. Residues 79 to 88 show a composition bias toward acidic residues; the sequence is GEDEDDDGFI.

As to expression, expressed in stomach, kidney, large and small intestine and kidney.

The protein resides in the membrane. It localises to the early endosome. The protein localises to the recycling endosome. Its subcellular location is the cell membrane. Functionally, may be involved in membrane trafficking between endosomes and plasma membrane. The protein is Type III endosome membrane protein TEMP of Mus musculus (Mouse).